A 352-amino-acid chain; its full sequence is UPF0324 membrane protein RA0957 (352 aa).

Helical transmembrane passes span 24–43 (VVSY…SAQF), 48–67 (YGAP…NFLS), 104–126 (LGVS…AIIV), 136–158 (LSLL…LNAV), 169–191 (LALT…PVLA), 201–223 (SGVF…FAMS), 235–257 (IVRV…VLGA), 272–294 (GFVL…AAAG), 301–318 (SRWL…KTSV), and 328–350 (HVTL…LLWY).

It belongs to the UPF0324 family.

The protein resides in the cell membrane. In Rhizobium meliloti (strain 1021) (Ensifer meliloti), this protein is UPF0324 membrane protein RA0957.